The primary structure comprises 232 residues: Large ribosomal subunit protein uL1 (232 aa).

It belongs to the universal ribosomal protein uL1 family. As to quaternary structure, part of the 50S ribosomal subunit.

Its function is as follows. Binds directly to 23S rRNA. The L1 stalk is quite mobile in the ribosome, and is involved in E site tRNA release. In terms of biological role, protein L1 is also a translational repressor protein, it controls the translation of the L11 operon by binding to its mRNA. In Xanthomonas campestris pv. campestris (strain B100), this protein is Large ribosomal subunit protein uL1.